Reading from the N-terminus, the 623-residue chain is Riboflavin biosynthesis protein PYRR, chloroplastic (623 aa).

A chloroplast-targeting transit peptide spans 1–45 (MPLPQPLLGGASPAPARAASSFLHPLLHTRHRVSTAPAAASSFVP). The CMP/dCMP-type deaminase domain occupies 52–181 (ANDAMLLRRA…ALRNEGIQVD (130 aa)).

It in the C-terminal section; belongs to the YbiA family.

The protein localises to the plastid. Its subcellular location is the chloroplast. It carries out the reaction 5-amino-6-(5-phospho-D-ribitylamino)uracil + NADP(+) = 5-amino-6-(5-phospho-D-ribosylamino)uracil + NADPH + H(+). The catalysed reaction is 2,5-diamino-6-hydroxy-4-(5-phosphoribosylamino)-pyrimidine + H2O = 2,5,6-triamino-4-hydroxypyrimidine + D-ribose 5-phosphate. The enzyme catalyses 5-amino-6-(5-phospho-D-ribosylamino)uracil + H2O = 5,6-diaminouracil + D-ribose 5-phosphate. The protein operates within cofactor biosynthesis; riboflavin biosynthesis; 5-amino-6-(D-ribitylamino)uracil from GTP: step 3/4. Functionally, pyrimidine reductase involved in the riboflavin biosynthesis pathway. Also has a non-functional N-terminal deaminase domain that lacks the catalytically essential zinc-binding residues. 39% activity when NADH replaces NADPH. No evidence for a phosphatase activity conferred by the N-terminal domain. Catalyzes the hydrolysis of the N-glycosidic bond in the first two intermediates of riboflavin biosynthesis, which are highly reactive metabolites, yielding relatively innocuous products. Thus, can divert a surplus of harmful intermediates into relatively harmless products and pre-empt the damage these intermediates would otherwise do. Has no activity against GTP, nucleoside monophosphates or ADP-ribose. The sequence is that of Riboflavin biosynthesis protein PYRR, chloroplastic (PYRR) from Zea mays (Maize).